Here is a 185-residue protein sequence, read N- to C-terminus: Acireductone dioxygenase (185 aa).

Fe(2+) contacts are provided by H97, H99, E103, and H141. Ni(2+)-binding residues include H97, H99, E103, and H141.

It belongs to the acireductone dioxygenase (ARD) family. Monomer. Fe(2+) is required as a cofactor. It depends on Ni(2+) as a cofactor.

It carries out the reaction 1,2-dihydroxy-5-(methylsulfanyl)pent-1-en-3-one + O2 = 3-(methylsulfanyl)propanoate + CO + formate + 2 H(+). The enzyme catalyses 1,2-dihydroxy-5-(methylsulfanyl)pent-1-en-3-one + O2 = 4-methylsulfanyl-2-oxobutanoate + formate + 2 H(+). It functions in the pathway amino-acid biosynthesis; L-methionine biosynthesis via salvage pathway; L-methionine from S-methyl-5-thio-alpha-D-ribose 1-phosphate: step 5/6. Catalyzes 2 different reactions between oxygen and the acireductone 1,2-dihydroxy-3-keto-5-methylthiopentene (DHK-MTPene) depending upon the metal bound in the active site. Fe-containing acireductone dioxygenase (Fe-ARD) produces formate and 2-keto-4-methylthiobutyrate (KMTB), the alpha-ketoacid precursor of methionine in the methionine recycle pathway. Ni-containing acireductone dioxygenase (Ni-ARD) produces methylthiopropionate, carbon monoxide and formate, and does not lie on the methionine recycle pathway. In Stenotrophomonas maltophilia (strain K279a), this protein is Acireductone dioxygenase.